We begin with the raw amino-acid sequence, 474 residues long: C6 finger domain transcription factor aclZ (474 aa).

Residues 42–69 (CNQCHAAKVRCSGERTGCDRCNNLQYQC) constitute a DNA-binding region (zn(2)-C6 fungal-type). 2 disordered regions span residues 85–148 (RGNK…SHSA) and 177–206 (MSSD…DSHT). Residues 90 to 105 (VRTTTEALQRPATAST) show a composition bias toward polar residues. The span at 117–138 (TDQRSENDPLSRSDFGEQDAAH) shows a compositional bias: basic and acidic residues.

The protein localises to the nucleus. Transcription factor that specifically regulates the gene cluster that mediates the biosynthesis of aspirochlorine (or antibiotic A30641), an unusual halogenated spiro compound with distinctive antifungal properties due to selective inhibition of protein biosynthesis, and which is also active against bacteria, viruses, and murine tumor cells. In Aspergillus oryzae (strain ATCC 42149 / RIB 40) (Yellow koji mold), this protein is C6 finger domain transcription factor aclZ.